Here is an 850-residue protein sequence, read N- to C-terminus: MTQVTVKELAQEVEAPVERLLQQMREAGLPHTDAGQVVTDNEKQTLLTHLKSSHKSKAEEPRKITLQRKTTSTLRVAGSKSISVEVRKKKVFVQRSPEEIQAEQKREQEERRAAENAAREKADADARQRNEEQARRQAAQAPAAAPVAKAEPAPAAAAPAAPAVPDAPVSEDAAARAAERKKDEARRNESRTRDDDRRGGGVAGERRGEAPRVSIKVKVKEKEKAPTPRAAPRTTDEESDGFRRGRGGKGKPKKRNQHGFQNPTGPVIRDVTIGETITVSDLAQQMSVKGAEVVKFMFKLGTPVTINQVLDQETAQLVAEELGHKVTLVSDTALEDSLAESLKFEGESESRAPVVTVMGHVDHGKTSLLDYIRRAKVAAGEAGGITQHIGAYHVETDRGMVTFLDTPGHAAFTQMRARGAKATDIVILVVAADDGVMPQTREAVQHAKAAGVPLVVAVNKIDKPGADLDRIRNELAVEGVTSEDWGGDTPFVKVSAKMGTGVDELLEAVLLQAEILELKATPTAPGRGVVVESRLDKGRGPVATILVQDGTLRQGDMVLVGSNYGRVRAMLDENGKPVKEAGPSIPVEILGLDGTPDAGDEMSVVADEKKAREVALFRQGKYREVKLARAHAGKLENIFETMGQEEKKTLNIVLKTDVRGSLEALQGSLSSLGNDEVQVRVIGGGVGGITESDANLALASNAVLFGFNVRADAGARKIVEQEGLDMRYYNVIYDIIEDVKKALTGMLGSDVRENILGVAEVRDVFRSPKFGAIAGCMVIEGTVYRNRPIRVLREDVVIFEGELESLRRFKDDASEVRNGMECGIGVKSYNDVKVGDKIEVFEKVQVARTL.

2 disordered regions span residues 50-72 (LKSSHKSKAEEPRKITLQRKTTS) and 92-267 (FVQR…TGPV). A compositionally biased stretch (basic and acidic residues) spans 96–135 (SPEEIQAEQKREQEERRAAENAAREKADADARQRNEEQAR). Residues 136–172 (RQAAQAPAAAPVAKAEPAPAAAAPAAPAVPDAPVSED) are compositionally biased toward low complexity. Basic and acidic residues-rich tracts occupy residues 173–210 (AAARAAERKKDEARRNESRTRDDDRRGGGVAGERRGEA) and 234–243 (TTDEESDGFR). The segment covering 244 to 257 (RGRGGKGKPKKRNQ) has biased composition (basic residues). The region spanning 350–517 (SRAPVVTVMG…AVLLQAEILE (168 aa)) is the tr-type G domain. The segment at 359–366 (GHVDHGKT) is G1. 359-366 (GHVDHGKT) lines the GTP pocket. Positions 384-388 (GITQH) are G2. The segment at 405–408 (DTPG) is G3. GTP contacts are provided by residues 405 to 409 (DTPGH) and 459 to 462 (NKID). A G4 region spans residues 459–462 (NKID). Residues 495–497 (SAK) form a G5 region.

The protein belongs to the TRAFAC class translation factor GTPase superfamily. Classic translation factor GTPase family. IF-2 subfamily.

It localises to the cytoplasm. One of the essential components for the initiation of protein synthesis. Protects formylmethionyl-tRNA from spontaneous hydrolysis and promotes its binding to the 30S ribosomal subunits. Also involved in the hydrolysis of GTP during the formation of the 70S ribosomal complex. The sequence is that of Translation initiation factor IF-2 from Pseudomonas entomophila (strain L48).